The primary structure comprises 547 residues: Malolactic enzyme (547 aa).

Tyrosine 92 acts as the Proton donor in catalysis. Residue lysine 165 is the Proton acceptor of the active site. Residue lysine 165 coordinates substrate. Mn(2+)-binding residues include glutamate 236, aspartate 237, and aspartate 260. NAD(+) contacts are provided by residues 293-296 (AGTA), asparagine 405, and asparagine 450. Asparagine 450 provides a ligand contact to substrate.

This sequence belongs to the malic enzymes family. In terms of assembly, homodimer. Mn(2+) serves as cofactor. NAD(+) is required as a cofactor.

It carries out the reaction (S)-malate + H(+) = (S)-lactate + CO2. Its function is as follows. Involved in the malolactic fermentation (MLF) of wine, which results in a natural decrease in acidity and favorable changes in wine flavors. Catalyzes the decarboxylation of L-malate to L-lactate. In Lactiplantibacillus plantarum (strain ATCC BAA-793 / NCIMB 8826 / WCFS1) (Lactobacillus plantarum), this protein is Malolactic enzyme.